A 405-amino-acid polypeptide reads, in one-letter code: Potassium channel subfamily K member 13 (405 aa).

Over 1 to 19 (MAGRGCSCSPGHLNEDNAR) the chain is Cytoplasmic. Residues 20–40 (FLLLAGLILLYLLGGAAVFSA) form a helical membrane-spanning segment. Residues asparagine 59 and asparagine 65 are each glycosylated (N-linked (GlcNAc...) asparagine). An intramembrane region (pore-forming) is located at residues 95 to 115 (WDFTGAFYFVGTVVTTIGFGM). 3 residues coordinate K(+): threonine 110, isoleucine 111, and glycine 112. The interval 110–115 (TIGFGM) is selectivity filter 1. Residues 125–145 (VFLIFYGLIGCASTILFFNLF) traverse the membrane as a helical segment. Topologically, residues 146-193 (LERLITVIAYVMRTCHHQQLRRRGTVARDNRKAPRKGEADSLAGWKPS) are cytoplasmic. A helical transmembrane segment spans residues 194–214 (VYYVMLILCLASVAISCGASA). The pore-forming intramembrane region spans 224 to 244 (YFDSVYFCFVASSTIGFGDLV). 4 residues coordinate K(+): threonine 237, isoleucine 238, glycine 239, and phenylalanine 240. Residues 237–242 (TIGFGD) form a selectivity filter 2 region. Residues 263–283 (FFILMGVCCIYSMFNVISILI) traverse the membrane as a helical segment. Residues 284 to 405 (KQTVNWILRK…NRLAETSGDR (122 aa)) are Cytoplasmic-facing.

The protein belongs to the two pore domain potassium channel (TC 1.A.1.8) family. In terms of assembly, homodimer. Heterodimer with KCNK12. As to expression, ubiquitous. In brain expression is rather low and restricted to the olfactory bulb and tubercle, to the ventromedial hypothalamic nucleus, lateral septal nucleus dorsal, lateral mammillary nucleus, lateral parabrachial nuclei, reticular nucleus and reunions nuclei.

It localises to the cell membrane. The enzyme catalyses K(+)(in) = K(+)(out). With respect to regulation, the channel currents are activated by arachidonic acid, inhibited by volatile anesthetic halothane, partially inhibited by Ba(2+) ions and only weakly inhibited by extracellular acidification to pH 6. In terms of biological role, k(+) channel that conducts outward rectifying tonic currents potentiated by purinergic signals. Homo- and heterodimerizes to form functional channels with distinct regulatory and gating properties. Contributes most of K(+) currents at the plasma membrane of resting microglia. Maintains a depolarized membrane potential required for proper ramified microglia morphology and phagocytosis, selectively mediating microglial pruning of presynaptic compartments at hippocampal excitatory synapses. Upon local release of ATP caused by neuronal injury or infection, it is potentiated by P2RY12 and P2RX7 receptor signaling and contributes to ATP-triggered K(+) efflux underlying microglial NLRP3 inflammasome assembly and IL1B release. This Rattus norvegicus (Rat) protein is Potassium channel subfamily K member 13.